A 210-amino-acid polypeptide reads, in one-letter code: Protein RCR2 (210 aa).

A helical membrane pass occupies residues 41-61 (WIFFIFFIVALLILLFSTAKV). The segment at 125-149 (PNGKTEYLAPPPLSEEQASSTDKDL) is disordered. At serine 161 the chain carries Phosphoserine. Over residues 175–199 (NNFVNGQSNRNEQHSPTVESSSFDV) the composition is skewed to polar residues. The segment at 175–210 (NNFVNGQSNRNEQHSPTVESSSFDVNNAPARAKVSK) is disordered. A Phosphothreonine modification is found at threonine 191.

To yeast YBR005W.

It is found in the membrane. The sequence is that of Protein RCR2 (RCR2) from Saccharomyces cerevisiae (strain ATCC 204508 / S288c) (Baker's yeast).